The sequence spans 394 residues: MSQLETRTEPMVVNFGPHHPSMHGVLRLVVTLDGEDVVDCEPVIGYLHRGMEKIAENRTSVMFVPYVSRMDYAAGMFYEAIVVNAPERLANISVPKRASYIRVLMLELNRIANHLLWLGPFLADVGAQTPFFYIFREREMIYDLWEAATGQRLINNNYFRIGGVACDLPWGWLEKCQDFCDWFGPKIDEYEKLITNNPIFRRRIEGLGAIGRDEAINWSLSGPMLRASGVPWDLRKVDHYECYDDFDWDVAWEKEGDCYARYRVRIEEMRQSLKILRQACDMIPGGPTENLEAQRMAEGKTSPFMGFDYQYVAKKVAPTFKIPNGELYTRLESGKGEIGVFLQGNNDVTPWRFKIRAADLNNLQILPHILKGAKVADIMAILGSIDVIMGSVDR.

The protein belongs to the complex I 49 kDa subunit family. NDH-1 can be composed of about 15 different subunits; different subcomplexes with different compositions have been identified which probably have different functions.

Its subcellular location is the cellular thylakoid membrane. The enzyme catalyses a plastoquinone + NADH + (n+1) H(+)(in) = a plastoquinol + NAD(+) + n H(+)(out). It catalyses the reaction a plastoquinone + NADPH + (n+1) H(+)(in) = a plastoquinol + NADP(+) + n H(+)(out). Functionally, NDH-1 shuttles electrons from an unknown electron donor, via FMN and iron-sulfur (Fe-S) centers, to quinones in the respiratory and/or the photosynthetic chain. The immediate electron acceptor for the enzyme in this species is believed to be plastoquinone. Couples the redox reaction to proton translocation, and thus conserves the redox energy in a proton gradient. Cyanobacterial NDH-1 also plays a role in inorganic carbon-concentration. This chain is NAD(P)H-quinone oxidoreductase subunit H, found in Prochlorococcus marinus (strain MIT 9313).